The sequence spans 142 residues: Large ribosomal subunit protein uL13 (142 aa).

This sequence belongs to the universal ribosomal protein uL13 family. In terms of assembly, part of the 50S ribosomal subunit.

In terms of biological role, this protein is one of the early assembly proteins of the 50S ribosomal subunit, although it is not seen to bind rRNA by itself. It is important during the early stages of 50S assembly. The protein is Large ribosomal subunit protein uL13 of Shigella dysenteriae serotype 1 (strain Sd197).